The chain runs to 324 residues: MSVKLACYVTASVTVATLMVCFMTMSTIYSEVDGFREKLDTEMNVFRQSTNGLWKDIVVIGRSSKRVRRQYEETNATPTPHADGSPSAPPGQPPAVPPVFNQPKTPNGANGNGPTCNCNADNKCPAGPSGPKGVPGVPGLDGVPGLDGVPGVGADDIAPQRESVGCFTCPQGPVGPPGALGRPGPRGLPGPRGQNGNPGRDGQPGHPGEQGSSGQIGKIGEPGPPGEKGRDAEHPIGRPGPKGPRGDQGPTGPAGQNGLHGPPGEPGTVGPEGPSGKQGRQGPDGTQGETGPDGRPGKDAEYCQCPDKSPPSEAVNANRGYRNI.

Disordered regions lie at residues 68–108 (RRQY…TPNG) and 129–324 (SGPK…YRNI). The span at 87–97 (SAPPGQPPAVP) shows a compositional bias: pro residues. Triple-helical region stretches follow at residues 127 to 153 (GPSG…PGVG), 171 to 231 (QGPV…KGRD), and 237 to 299 (GRPG…PGKD). Low complexity-rich tracts occupy residues 129-156 (SGPK…GADD) and 177-201 (PGAL…PGRD). Residues 227–236 (EKGRDAEHPI) are compositionally biased toward basic and acidic residues.

This sequence belongs to the cuticular collagen family. As to quaternary structure, collagen polypeptide chains are complexed within the cuticle by disulfide bonds and other types of covalent cross-links.

In terms of biological role, nematode cuticles are composed largely of collagen-like proteins. The cuticle functions both as an exoskeleton and as a barrier to protect the worm from its environment. This is a collagen critical for organismal morphogenesis. Mutations in sqt-1 can lengthen, shorten, or helically twist the entire animal. In Caenorhabditis elegans, this protein is Cuticle collagen sqt-1 (sqt-1).